The following is a 444-amino-acid chain: Acyl-CoA 6-desaturase (444 aa).

At 1–130 (MGKGGNQGEG…EDMNLFKTNH (130 aa)) the chain is on the cytoplasmic side. A Cytochrome b5 heme-binding domain is found at 18 to 95 (MPTFRWEEIQ…LKPLLIGELA (78 aa)). Residues 131-151 (LFFFLLLSHIIVMESIAWFIL) form a helical membrane-spanning segment. At 152–157 (SYFGNG) the chain is on the lumenal side. The helical transmembrane segment at 158–178 (WIPTVITAFVLATSQAQAGWL) threads the bilayer. At 179 to 264 (QHDYGHLSVY…KYLPYNHQHE (86 aa)) the chain is on the cytoplasmic side. Positions 180-184 (HDYGH) match the Histidine box-1 motif. The short motif at 217-221 (HFQHH) is the Histidine box-2 element. The chain crosses the membrane as a helical span at residues 265-285 (YFFLIGPPLLIPMYFQYQIIM). Over 286-305 (TMIRRRDWVDLAWAISYYAR) the chain is Lumenal. The helical transmembrane segment at 306–326 (FFYTYIPFYGILGALVFLNFI) threads the bilayer. The Cytoplasmic portion of the chain corresponds to 327 to 444 (RFLESHWFVW…ELWLDAYLHK (118 aa)). Positions 382–386 (QIEHH) match the Histidine box-3 motif.

This sequence belongs to the fatty acid desaturase type 1 family. Expressed in the liver and brain (at protein level). Highest activity is found in the liver and adrenals followed by the testes and other organs, absent in adipose tissue.

Its subcellular location is the endoplasmic reticulum membrane. It is found in the microsome membrane. The enzyme catalyses (9Z,12Z)-octadecadienoyl-CoA + 2 Fe(II)-[cytochrome b5] + O2 + 2 H(+) = (6Z,9Z,12Z)-octadecatrienoyl-CoA + 2 Fe(III)-[cytochrome b5] + 2 H2O. It catalyses the reaction (9Z,12Z,15Z)-octadecatrienoyl-CoA + 2 Fe(II)-[cytochrome b5] + O2 + 2 H(+) = (6Z,9Z,12Z,15Z)-octadecatetraenoyl-CoA + 2 Fe(III)-[cytochrome b5] + 2 H2O. The catalysed reaction is (9Z,12Z,15Z,18Z,21Z)-tetracosapentaenoyl-CoA + 2 Fe(II)-[cytochrome b5] + O2 + 2 H(+) = (6Z,9Z,12Z,15Z,18Z,21Z)-tetracosahexaenoyl-CoA + 2 Fe(III)-[cytochrome b5] + 2 H2O. It carries out the reaction (11E)-octadecenoyl-CoA + 2 Fe(II)-[cytochrome b5] + O2 + 2 H(+) = (6Z,11E)-octadecadienoyl-CoA + 2 Fe(III)-[cytochrome b5] + 2 H2O. The enzyme catalyses (11Z,14Z)-eicosadienoyl-CoA + 2 Fe(II)-[cytochrome b5] + O2 + 2 H(+) = (8Z,11Z,14Z)-eicosatrienoyl-CoA + 2 Fe(III)-[cytochrome b5] + 2 H2O. It catalyses the reaction (11Z,14Z,17Z)-eicosatrienoyl-CoA + 2 Fe(II)-[cytochrome b5] + O2 + 2 H(+) = (8Z,11Z,14Z,17Z)-eicosatetraenoyl-CoA + 2 Fe(III)-[cytochrome b5] + 2 H2O. The protein operates within lipid metabolism; polyunsaturated fatty acid biosynthesis. In terms of biological role, involved in the biosynthesis of highly unsaturated fatty acids (HUFA) from the essential polyunsaturated fatty acids (PUFA) linoleic acid (LA) (18:2n-6) and alpha-linolenic acid (ALA) (18:3n-3) precursors, acting as a fatty acyl-coenzyme A (CoA) desaturase that introduces a cis double bond at carbon 6 of the fatty acyl chain. Catalyzes the first and rate limiting step in this pathway which is the desaturation of LA (18:2n-6) and ALA (18:3n-3) into gamma-linoleate (GLA) (18:3n-6) and stearidonate (18:4n-3), respectively. Subsequently, in the biosynthetic pathway of HUFA n-3 series, it desaturates tetracosapentaenoate (24:5n-3) to tetracosahexaenoate (24:6n-3), which is then converted to docosahexaenoate (DHA)(22:6n-3), an important lipid for nervous system function. It can also desaturate (11E)-octadecenoate (trans-vaccenoate) at carbon 6 generating (6Z,11E)-octadecadienoate. In addition to Delta-6 activity, this enzyme exhibits Delta-8 activity with slight biases toward n-3 fatty acyl-CoA substrates. This chain is Acyl-CoA 6-desaturase (Fads2), found in Rattus norvegicus (Rat).